The sequence spans 696 residues: Elongation factor G (696 aa).

A tr-type G domain is found at 8–290; sequence ERYRNIGVMA…AVLDYLPSPA (283 aa). GTP-binding positions include 17-24, 88-92, and 142-145; these read AHIDAGKT, DTPGH, and NKMD.

The protein belongs to the TRAFAC class translation factor GTPase superfamily. Classic translation factor GTPase family. EF-G/EF-2 subfamily.

It is found in the cytoplasm. Functionally, catalyzes the GTP-dependent ribosomal translocation step during translation elongation. During this step, the ribosome changes from the pre-translocational (PRE) to the post-translocational (POST) state as the newly formed A-site-bound peptidyl-tRNA and P-site-bound deacylated tRNA move to the P and E sites, respectively. Catalyzes the coordinated movement of the two tRNA molecules, the mRNA and conformational changes in the ribosome. This is Elongation factor G from Nitrosospira multiformis (strain ATCC 25196 / NCIMB 11849 / C 71).